The sequence spans 431 residues: MGKNVVVLGTQWGDEGKGKVVDLLTESAATVVRFQGGHNAGHTLVIDGEKTVLHLIPSGVLRADKTCVIGNGVVLSPEALMDEIRELEAKGVPVRERLRLSPACPLILPYHVRLDQAREKARGIAKIGTTGRGIGPAYEDKVARRGLRLGDMLHRERFASKLGEVLDYHNFVLTQYHHEAPVDFQRVLDEAMEIAEELRPMVCDTVSLVHDTRKAGENILFEGAQGSLLDIDHGTYPYVTSSNTTAGGTATGSGVGPLYLDYVLGITKAYTTRVGSGPFPTELFDEFGRHLAEKGHEFGATTGRARRCGWFDAVALRHAVQINSVSGLCLTKLDVLDGLENIRVCIGYRSKDGETIDTPVDSEGYEVIEPLYQDLPGWSESTLGVKRIEDLPNNARAYISFLEEQTGVPIDIISTGPDRNETIVLRNPFLD.

Residues 13–19 (GDEGKGK) and 41–43 (GHT) each bind GTP. Asp-14 acts as the Proton acceptor in catalysis. Mg(2+)-binding residues include Asp-14 and Gly-41. IMP-binding positions include 14-17 (DEGK), 39-42 (NAGH), Thr-130, Arg-144, Gln-225, Thr-240, and Arg-304. The Proton donor role is filled by His-42. Position 300–306 (300–306 (ATTGRAR)) interacts with substrate. GTP contacts are provided by residues Arg-306, 332-334 (KLD), and 414-416 (STG).

The protein belongs to the adenylosuccinate synthetase family. In terms of assembly, homodimer. Requires Mg(2+) as cofactor.

The protein localises to the cytoplasm. The catalysed reaction is IMP + L-aspartate + GTP = N(6)-(1,2-dicarboxyethyl)-AMP + GDP + phosphate + 2 H(+). The protein operates within purine metabolism; AMP biosynthesis via de novo pathway; AMP from IMP: step 1/2. In terms of biological role, plays an important role in the de novo pathway of purine nucleotide biosynthesis. Catalyzes the first committed step in the biosynthesis of AMP from IMP. The chain is Adenylosuccinate synthetase from Chromohalobacter salexigens (strain ATCC BAA-138 / DSM 3043 / CIP 106854 / NCIMB 13768 / 1H11).